A 468-amino-acid polypeptide reads, in one-letter code: BTB and MATH domain-containing protein 45 (468 aa).

Positions 7–124 (VFELSHVFKD…DDSIIIEVLV (118 aa)) constitute an MATH domain. BTB domains are found at residues 148–215 (SDGI…IDDD) and 304–368 (SDVI…IDDL).

In Caenorhabditis elegans, this protein is BTB and MATH domain-containing protein 45 (bath-45).